A 304-amino-acid polypeptide reads, in one-letter code: Undecaprenyl-diphosphatase (304 aa).

8 helical membrane-spanning segments follow: residues 5–25 (FLFI…EFVP), 47–67 (GFPE…VVVL), 72–92 (ISSS…LKTS), 111–131 (FGIN…LFHD), 137–157 (LFST…LIVI), 209–231 (ISGL…AMVG), 248–268 (TNWI…LVVI), and 283–303 (FAIY…TKVI).

The protein belongs to the UppP family.

The protein resides in the cell membrane. The enzyme catalyses di-trans,octa-cis-undecaprenyl diphosphate + H2O = di-trans,octa-cis-undecaprenyl phosphate + phosphate + H(+). Catalyzes the dephosphorylation of undecaprenyl diphosphate (UPP). Confers resistance to bacitracin. The sequence is that of Undecaprenyl-diphosphatase from Clostridium perfringens (strain ATCC 13124 / DSM 756 / JCM 1290 / NCIMB 6125 / NCTC 8237 / Type A).